The sequence spans 430 residues: UDP-N-acetylglucosamine 1-carboxyvinyltransferase (430 aa).

22-23 provides a ligand contact to phosphoenolpyruvate; it reads KN. R102 is a UDP-N-acetyl-alpha-D-glucosamine binding site. C126 acts as the Proton donor in catalysis. C126 carries the 2-(S-cysteinyl)pyruvic acid O-phosphothioketal modification. UDP-N-acetyl-alpha-D-glucosamine contacts are provided by residues 131–135, 172–175, D317, and I339; these read RPVDL and KVSV.

This sequence belongs to the EPSP synthase family. MurA subfamily.

The protein resides in the cytoplasm. The catalysed reaction is phosphoenolpyruvate + UDP-N-acetyl-alpha-D-glucosamine = UDP-N-acetyl-3-O-(1-carboxyvinyl)-alpha-D-glucosamine + phosphate. It participates in cell wall biogenesis; peptidoglycan biosynthesis. Functionally, cell wall formation. Adds enolpyruvyl to UDP-N-acetylglucosamine. This chain is UDP-N-acetylglucosamine 1-carboxyvinyltransferase, found in Rhizobium leguminosarum bv. trifolii (strain WSM2304).